A 403-amino-acid polypeptide reads, in one-letter code: uncharacterized protein (403 aa).

A run of 6 helical transmembrane segments spans residues 31–51 (FLIA…IGSF), 186–206 (LPIG…GIIV), 238–258 (ISAV…PIII), 268–288 (LAIF…SLLC), 303–323 (LISP…TIMV), and 355–375 (LIEI…SFIL).

To B.subtilis YhaP.

It localises to the cell membrane. This is an uncharacterized protein from Methanocaldococcus jannaschii (strain ATCC 43067 / DSM 2661 / JAL-1 / JCM 10045 / NBRC 100440) (Methanococcus jannaschii).